A 201-amino-acid polypeptide reads, in one-letter code: Small ribosomal subunit protein uS4 (201 aa).

The disordered stretch occupies residues Gly21 to Lys43. The 61-residue stretch at Arg93–Lys153 folds into the S4 RNA-binding domain.

It belongs to the universal ribosomal protein uS4 family. Part of the 30S ribosomal subunit. Contacts protein S5. The interaction surface between S4 and S5 is involved in control of translational fidelity.

One of the primary rRNA binding proteins, it binds directly to 16S rRNA where it nucleates assembly of the body of the 30S subunit. Functionally, with S5 and S12 plays an important role in translational accuracy. The sequence is that of Small ribosomal subunit protein uS4 from Levilactobacillus brevis (strain ATCC 367 / BCRC 12310 / CIP 105137 / JCM 1170 / LMG 11437 / NCIMB 947 / NCTC 947) (Lactobacillus brevis).